A 218-amino-acid chain; its full sequence is N-(5'-phosphoribosyl)anthranilate isomerase (218 aa).

This sequence belongs to the TrpF family.

It catalyses the reaction N-(5-phospho-beta-D-ribosyl)anthranilate = 1-(2-carboxyphenylamino)-1-deoxy-D-ribulose 5-phosphate. It functions in the pathway amino-acid biosynthesis; L-tryptophan biosynthesis; L-tryptophan from chorismate: step 3/5. The chain is N-(5'-phosphoribosyl)anthranilate isomerase from Bordetella pertussis (strain Tohama I / ATCC BAA-589 / NCTC 13251).